A 465-amino-acid chain; its full sequence is Cysteine--tRNA ligase (465 aa).

Cysteine 27 is a Zn(2+) binding site. Residues 29–39 (PTVYDDAHLGH) carry the 'HIGH' region motif. Residues cysteine 207, histidine 237, and glutamate 241 each contribute to the Zn(2+) site. The 'KMSKS' region signature appears at 269–273 (KMSKS). ATP is bound at residue lysine 272.

This sequence belongs to the class-I aminoacyl-tRNA synthetase family. As to quaternary structure, monomer. It depends on Zn(2+) as a cofactor.

The protein resides in the cytoplasm. It catalyses the reaction tRNA(Cys) + L-cysteine + ATP = L-cysteinyl-tRNA(Cys) + AMP + diphosphate. This Helicobacter pylori (strain J99 / ATCC 700824) (Campylobacter pylori J99) protein is Cysteine--tRNA ligase (cysS).